A 156-amino-acid chain; its full sequence is 6,7-dimethyl-8-ribityllumazine synthase (156 aa).

5-amino-6-(D-ribitylamino)uracil contacts are provided by residues Phe-22, 56–58 (AFE), and 80–82 (VVI). 85-86 (ST) contributes to the (2S)-2-hydroxy-3-oxobutyl phosphate binding site. The active-site Proton donor is the His-88. Phe-113 serves as a coordination point for 5-amino-6-(D-ribitylamino)uracil. Arg-127 provides a ligand contact to (2S)-2-hydroxy-3-oxobutyl phosphate.

The protein belongs to the DMRL synthase family.

It catalyses the reaction (2S)-2-hydroxy-3-oxobutyl phosphate + 5-amino-6-(D-ribitylamino)uracil = 6,7-dimethyl-8-(1-D-ribityl)lumazine + phosphate + 2 H2O + H(+). It participates in cofactor biosynthesis; riboflavin biosynthesis; riboflavin from 2-hydroxy-3-oxobutyl phosphate and 5-amino-6-(D-ribitylamino)uracil: step 1/2. Functionally, catalyzes the formation of 6,7-dimethyl-8-ribityllumazine by condensation of 5-amino-6-(D-ribitylamino)uracil with 3,4-dihydroxy-2-butanone 4-phosphate. This is the penultimate step in the biosynthesis of riboflavin. The polypeptide is 6,7-dimethyl-8-ribityllumazine synthase (Streptococcus agalactiae serotype Ia (strain ATCC 27591 / A909 / CDC SS700)).